The following is a 165-amino-acid chain: Myosin regulatory light chain 2A, cardiac muscle isoform (165 aa).

Residue A2 is modified to N,N,N-trimethylalanine. 3 consecutive EF-hand domains span residues 24–59, 94–128, and 129–164; these read AQIQ…LGRL, DPEE…QEGR, and FSQE…GEEK. Ca(2+) contacts are provided by D37, N39, D41, and D48.

As to quaternary structure, myosin is a hexamer of 2 heavy chains and 4 light chains. Post-translationally, the N-terminus is blocked. N,N,N-trimethylalanine, found in other myosin light chains would not have been detected in the N-terminal tryptic peptide in PubMed:7319048 because it would remain trimethylated and ninhydrin negative after hydrolysis.

The chain is Myosin regulatory light chain 2A, cardiac muscle isoform from Gallus gallus (Chicken).